Reading from the N-terminus, the 163-residue chain is Phosphopantetheine adenylyltransferase (163 aa).

S11 contributes to the substrate binding site. ATP-binding positions include 11-12 and H19; that span reads SF. 3 residues coordinate substrate: K43, A76, and R90. ATP contacts are provided by residues 91 to 93, E101, and 126 to 132; these read GLR and WQALSSS.

This sequence belongs to the bacterial CoaD family. Homohexamer. Mg(2+) is required as a cofactor.

The protein localises to the cytoplasm. It carries out the reaction (R)-4'-phosphopantetheine + ATP + H(+) = 3'-dephospho-CoA + diphosphate. It functions in the pathway cofactor biosynthesis; coenzyme A biosynthesis; CoA from (R)-pantothenate: step 4/5. Its function is as follows. Reversibly transfers an adenylyl group from ATP to 4'-phosphopantetheine, yielding dephospho-CoA (dPCoA) and pyrophosphate. The protein is Phosphopantetheine adenylyltransferase of Streptococcus pyogenes serotype M6 (strain ATCC BAA-946 / MGAS10394).